Consider the following 363-residue polypeptide: MPREKVRVLIVDDSASVRQILQTILNDDPDIEVMGTASDPFAAARRLQNEIPDVMILDIEMPRMDGMTFLRKIMAQRPIPVIICSSLTEEGSNVMFEAFEAGAVDIVPKPKIDTRQALLECSTRLREAVKSAARARVRPRAERRVVEKKLTADAIIPPPVQGKVRPTTERIVCIGASTGGTEALNDVLEMLPPHCPPLLIVQHMPAGFTAAFARRLDSVCQIRVKEAEDGEPVLPGSAYIAPGARHMLLQRIGLRYQIAIKDGPPVSRHRPSVDVLFRSAAQHAGANALGVIMTGMGDDGARGMLEMRKLGASTRAQDEDSCVVFGMPKEAIAHGGVEKVVPLHHIPREIMLWYQAGHVAVAG.

Positions 7–124 constitute a Response regulatory domain; sequence RVLIVDDSAS…RQALLECSTR (118 aa). Asp58 is modified (4-aspartylphosphate). A CheB-type methylesterase domain is found at 166 to 357; that stretch reads PTTERIVCIG…REIMLWYQAG (192 aa). Catalysis depends on residues Ser177, His203, and Asp299.

It belongs to the CheB family. In terms of processing, phosphorylated by CheA. Phosphorylation of the N-terminal regulatory domain activates the methylesterase activity.

It localises to the cytoplasm. The enzyme catalyses [protein]-L-glutamate 5-O-methyl ester + H2O = L-glutamyl-[protein] + methanol + H(+). The catalysed reaction is L-glutaminyl-[protein] + H2O = L-glutamyl-[protein] + NH4(+). Involved in chemotaxis. Part of a chemotaxis signal transduction system that modulates chemotaxis in response to various stimuli. Catalyzes the demethylation of specific methylglutamate residues introduced into the chemoreceptors (methyl-accepting chemotaxis proteins or MCP) by CheR. Also mediates the irreversible deamidation of specific glutamine residues to glutamic acid. The sequence is that of Protein-glutamate methylesterase/protein-glutamine glutaminase of group 3 operon from Bradyrhizobium diazoefficiens (strain JCM 10833 / BCRC 13528 / IAM 13628 / NBRC 14792 / USDA 110).